Here is an 88-residue protein sequence, read N- to C-terminus: Augerpeptide Hhe9a (88 aa).

Positions 1–21 are cleaved as a signal peptide; the sequence is MMTKTGLVLLFAFLLVFPVSS. The propeptide occupies 22–49; that stretch reads LPMDAEAGHARLEMDKRDAGNEAWTRLL. Cystine bridges form between C56–C71, C61–C73, and C67–C86.

As to expression, expressed by the venom duct.

Its subcellular location is the secreted. The sequence is that of Augerpeptide Hhe9a from Hastula hectica (Sea snail).